A 265-amino-acid chain; its full sequence is 5'-nucleotidase SurE (265 aa).

A divalent metal cation-binding residues include Asp12, Asp13, Ser43, and Asn91.

This sequence belongs to the SurE nucleotidase family. The cofactor is a divalent metal cation.

The protein resides in the cytoplasm. The enzyme catalyses a ribonucleoside 5'-phosphate + H2O = a ribonucleoside + phosphate. Nucleotidase that shows phosphatase activity on nucleoside 5'-monophosphates. The protein is 5'-nucleotidase SurE of Haloquadratum walsbyi (strain DSM 16790 / HBSQ001).